A 489-amino-acid chain; its full sequence is Pluviatolide synthase (489 aa).

The chain crosses the membrane as a helical span at residues 6–26 (SVLAMSSTLILALAMALIFLF). Position 432 (C432) interacts with heme.

Belongs to the cytochrome P450 family. Requires heme as cofactor. As to expression, expressed in leaves, rhizomes and stems.

It is found in the membrane. The catalysed reaction is (-)-matairesinol + reduced [NADPH--hemoprotein reductase] + O2 = (-)-pluviatolide + oxidized [NADPH--hemoprotein reductase] + 2 H2O + H(+). It participates in aromatic compound metabolism; phenylpropanoid biosynthesis. Its function is as follows. Cytochrome P450 involved in the biosynthesis of etoposide, a chemotherapeutic compound of the topoisomerase inhibitor family. Catalyzes the conversion of matairesinol to pluviatolide. This chain is Pluviatolide synthase, found in Sinopodophyllum hexandrum (Himalayan may apple).